Here is a 515-residue protein sequence, read N- to C-terminus: 2-isopropylmalate synthase (515 aa).

The Pyruvate carboxyltransferase domain occupies 5–267 (VIIFDTTLRD…DTRINTQEIH (263 aa)). Mn(2+) is bound by residues Asp14, His202, His204, and Asn238. The tract at residues 392 to 515 (VLDKLSAHST…VADIKSHKHH (124 aa)) is regulatory domain.

This sequence belongs to the alpha-IPM synthase/homocitrate synthase family. LeuA type 1 subfamily. As to quaternary structure, homodimer. Mn(2+) is required as a cofactor.

It localises to the cytoplasm. It carries out the reaction 3-methyl-2-oxobutanoate + acetyl-CoA + H2O = (2S)-2-isopropylmalate + CoA + H(+). Its pathway is amino-acid biosynthesis; L-leucine biosynthesis; L-leucine from 3-methyl-2-oxobutanoate: step 1/4. In terms of biological role, catalyzes the condensation of the acetyl group of acetyl-CoA with 3-methyl-2-oxobutanoate (2-ketoisovalerate) to form 3-carboxy-3-hydroxy-4-methylpentanoate (2-isopropylmalate). The chain is 2-isopropylmalate synthase from Haemophilus influenzae (strain 86-028NP).